The chain runs to 425 residues: MLTWPAPQIPELPGRGDVVRVHDSSTGRLVVAAEGPSASLYVCGITPYDATHIGHAATYVAFDLLGRAWRDAGQQVTYASNVTDVDDPLLERATATGVEWQDLAVEQTALFAEDMTALGVVPPDVYLGAVETIPPVAAAVEELVAAGAAYRVPLEEGAGGDAPALGDVYADVTADSAFGQVSRMDEATMLELFAERGGDPGRAGKRNALDPLLWRRERPGEPAWEAGSLGTGRPGWHIECAVIARAGLGLPFDVQGGGSDLLFPHHEMSTSHARLIGDGDVHGVGAATHVHAGLVGYQGEKMSKSRGNLVFVSRLRAEGVEPMAIRLALLAHHYRSDWEWTDASLTEGVARFETWRSAVSGNGGPDADATLAEVRAALADDLDAPRALAAVDRWAELSLAGTEKPVEGAPGVVSRAVNALLGVRL.

Residue Cys43 coordinates Zn(2+). L-cysteinyl-5'-AMP contacts are provided by residues 43 to 46, Thr58, and 81 to 83; these read CGIT and NVT. The 'HIGH' region signature appears at 45-55; it reads ITPYDATHIGH. The 'ERGGDP' region motif lies at 195 to 200; the sequence is ERGGDP. Trp236 contributes to the L-cysteinyl-5'-AMP binding site. Zn(2+) is bound at residue Cys240. 258–260 is a binding site for L-cysteinyl-5'-AMP; sequence GSD. Residue His265 participates in Zn(2+) binding. L-cysteinyl-5'-AMP is bound at residue Val295. Residues 301–305 carry the 'KMSKS' region motif; that stretch reads KMSKS.

Belongs to the class-I aminoacyl-tRNA synthetase family. MshC subfamily. As to quaternary structure, monomer. It depends on Zn(2+) as a cofactor.

The catalysed reaction is 1D-myo-inositol 2-amino-2-deoxy-alpha-D-glucopyranoside + L-cysteine + ATP = 1D-myo-inositol 2-(L-cysteinylamino)-2-deoxy-alpha-D-glucopyranoside + AMP + diphosphate + H(+). Catalyzes the ATP-dependent condensation of GlcN-Ins and L-cysteine to form L-Cys-GlcN-Ins. The protein is L-cysteine:1D-myo-inositol 2-amino-2-deoxy-alpha-D-glucopyranoside ligase of Sanguibacter keddieii (strain ATCC 51767 / DSM 10542 / NCFB 3025 / ST-74).